A 248-amino-acid chain; its full sequence is uncharacterized protein (248 aa).

Residues 104–122 (CDVAACVGATWIAGGFAGA) traverse the membrane as a helical segment.

It is found in the membrane. This is an uncharacterized protein from Escherichia coli (strain K12).